The following is a 98-amino-acid chain: NADH dehydrogenase [ubiquinone] 1 beta subcomplex subunit 3 (98 aa).

Ala2 is subject to N-acetylalanine. 3 positions are modified to pros-methylhistidine: His5, His7, and His9. N6-acetyllysine; alternate occurs at positions 23 and 34. N6-succinyllysine; alternate is present on residues Lys23 and Lys34. Residues Val66 to Leu88 traverse the membrane as a helical segment.

It belongs to the complex I NDUFB3 subunit family. Complex I is composed of 45 different subunits. In terms of processing, methylation at His residues by METTL9 enhances complex I-mediated mitochondrial respiration.

Its subcellular location is the mitochondrion inner membrane. In terms of biological role, accessory subunit of the mitochondrial membrane respiratory chain NADH dehydrogenase (Complex I), that is believed not to be involved in catalysis. Complex I functions in the transfer of electrons from NADH to the respiratory chain. The immediate electron acceptor for the enzyme is believed to be ubiquinone. The protein is NADH dehydrogenase [ubiquinone] 1 beta subcomplex subunit 3 (NDUFB3) of Gorilla gorilla gorilla (Western lowland gorilla).